The chain runs to 350 residues: Zinc finger protein 367 (350 aa).

The segment at 104-151 (SGLRGRGAPPPAASASAAASGGEDEEEASSPDSGHLKDGIRRGRPRAD) is disordered. The segment covering 137 to 151 (GHLKDGIRRGRPRAD) has biased composition (basic and acidic residues). 2 C2H2-type zinc fingers span residues 167–189 (IRCN…KRTH) and 195–219 (YLCD…QRLH). A disordered region spans residues 290–327 (KGKLVQKADQEQQDPLEYLQSDEEDDEKRGAQRRLQEQ). Residues 308 to 342 (LQSDEEDDEKRGAQRRLQEQRERLHGALALIELAN) adopt a coiled-coil conformation. Phosphoserine is present on Ser310. A compositionally biased stretch (basic and acidic residues) spans 316–327 (EKRGAQRRLQEQ).

The protein belongs to the krueppel C2H2-type zinc-finger protein family.

The protein resides in the nucleus. In terms of biological role, transcriptional activator. Isoform 1 may be involved in transcriptional activation of erythroid genes. The chain is Zinc finger protein 367 (ZNF367) from Homo sapiens (Human).